Reading from the N-terminus, the 453-residue chain is GTPase Der (453 aa).

EngA-type G domains lie at 3–167 (FTLA…PAQT) and 187–360 (IKVA…AVWN). Residues 9 to 16 (GRPNVGKS), 56 to 60 (DTAGL), 119 to 122 (NKSE), 193 to 200 (GRPNAGKS), 240 to 244 (DTAGL), and 305 to 308 (NKSD) contribute to the GTP site. The 85-residue stretch at 361–445 (TRIPTNPLNR…PIRLTLREKG (85 aa)) folds into the KH-like domain.

Belongs to the TRAFAC class TrmE-Era-EngA-EngB-Septin-like GTPase superfamily. EngA (Der) GTPase family. As to quaternary structure, associates with the 50S ribosomal subunit.

In terms of biological role, GTPase that plays an essential role in the late steps of ribosome biogenesis. The chain is GTPase Der from Azorhizobium caulinodans (strain ATCC 43989 / DSM 5975 / JCM 20966 / LMG 6465 / NBRC 14845 / NCIMB 13405 / ORS 571).